The primary structure comprises 215 residues: Urease accessory protein UreG (215 aa).

24–31 (GPVGSGKT) contacts GTP.

The protein belongs to the SIMIBI class G3E GTPase family. UreG subfamily. In terms of assembly, homodimer. UreD, UreF and UreG form a complex that acts as a GTP-hydrolysis-dependent molecular chaperone, activating the urease apoprotein by helping to assemble the nickel containing metallocenter of UreC. The UreE protein probably delivers the nickel.

It localises to the cytoplasm. Its function is as follows. Facilitates the functional incorporation of the urease nickel metallocenter. This process requires GTP hydrolysis, probably effectuated by UreG. This Burkholderia ambifaria (strain MC40-6) protein is Urease accessory protein UreG.